Consider the following 250-residue polypeptide: Global transcriptional regulator CodY (250 aa).

The segment at 1–146 is GAF domain; sequence MTLLEKTRKL…GATVVGLEIL (146 aa). Positions 194 to 213 form a DNA-binding region, H-T-H motif; sequence ASKIADKVGITRSVIVNALR.

It belongs to the CodY family.

The protein localises to the cytoplasm. Its function is as follows. DNA-binding global transcriptional regulator which is involved in the adaptive response to starvation and acts by directly or indirectly controlling the expression of numerous genes in response to nutrient availability. During rapid exponential growth, CodY is highly active and represses genes whose products allow adaptation to nutrient depletion. In Caldanaerobacter subterraneus subsp. tengcongensis (strain DSM 15242 / JCM 11007 / NBRC 100824 / MB4) (Thermoanaerobacter tengcongensis), this protein is Global transcriptional regulator CodY.